The sequence spans 445 residues: Phosphoglucosamine mutase (445 aa).

The Phosphoserine intermediate role is filled by S99. Residues S99, D242, D244, and D246 each contribute to the Mg(2+) site. Position 99 is a phosphoserine (S99).

It belongs to the phosphohexose mutase family. It depends on Mg(2+) as a cofactor. In terms of processing, activated by phosphorylation.

It catalyses the reaction alpha-D-glucosamine 1-phosphate = D-glucosamine 6-phosphate. Its function is as follows. Catalyzes the conversion of glucosamine-6-phosphate to glucosamine-1-phosphate. This Campylobacter jejuni subsp. jejuni serotype O:2 (strain ATCC 700819 / NCTC 11168) protein is Phosphoglucosamine mutase.